The sequence spans 82 residues: ATP synthase subunit c, chloroplastic (82 aa).

The next 2 membrane-spanning stretches (helical) occupy residues 4–24 and 57–77; these read IISAASVIAAGLAIGLAAIGP and LAFMEALTIYGLVVALALLFA.

It belongs to the ATPase C chain family. F-type ATPases have 2 components, F(1) - the catalytic core - and F(0) - the membrane proton channel. F(1) has five subunits: alpha(3), beta(3), gamma(1), delta(1), epsilon(1). F(0) has four main subunits: a(1), b(1), b'(1) and c(10-14). The alpha and beta chains form an alternating ring which encloses part of the gamma chain. F(1) is attached to F(0) by a central stalk formed by the gamma and epsilon chains, while a peripheral stalk is formed by the delta, b and b' chains.

Its subcellular location is the plastid. The protein localises to the chloroplast thylakoid membrane. Functionally, f(1)F(0) ATP synthase produces ATP from ADP in the presence of a proton or sodium gradient. F-type ATPases consist of two structural domains, F(1) containing the extramembraneous catalytic core and F(0) containing the membrane proton channel, linked together by a central stalk and a peripheral stalk. During catalysis, ATP synthesis in the catalytic domain of F(1) is coupled via a rotary mechanism of the central stalk subunits to proton translocation. Its function is as follows. Key component of the F(0) channel; it plays a direct role in translocation across the membrane. A homomeric c-ring of between 10-14 subunits forms the central stalk rotor element with the F(1) delta and epsilon subunits. The polypeptide is ATP synthase subunit c, chloroplastic (Thalassiosira pseudonana (Marine diatom)).